The chain runs to 553 residues: MIKINKILSLLIILLIINCNYQFVKADAESKALDIINRYRDIARYTFFTTDGHLEKYPSGFCGGTTIEDCKWDEYIEAVILLSGITFIIAAITLIFGIIFWIFRCLCFGGCKPTHGILCPGPKYDPDIGEGYSKGRVFILKLVTLIMVAGCVAVFITSLKGNSSVTSGINNLSDTVFNKTSYTLEQLIEISNQLNETKYQQFDQKQEIQSQLTQLISDGEELESKGEDISSNAKDINNIRTKIIIVGLVFCMVVAGLIGVSALIGLPRISRAASIALVILIPFMWIVFSVHYPINSVVADICISYDTTGVQQLSNFTNPIIEQVFEGCQNDNNTISVFEDLQSLVNNLLQNATDTSCDKINDACQLAFPRYPNDNPLSVPYQQNVLDCPPTLTCSNTTLSIYLFNTTVHDFNVKCKNAPTCGDLSTCDPSILTEVMSCDWVDVSSVNSCSQGGCQYNQQVVNTTKQIMQLYDILTSLTTLWTDKVVPLIKCSYLMPFIDEVQNIVCVDEVNSLDLLIAPTAVFAILLTGLGITGILGSKRFNSKYRVKGSRSA.

Residues 1-26 form the signal peptide; it reads MIKINKILSLLIILLIINCNYQFVKA. 2 consecutive transmembrane segments (helical) span residues 80 to 100 and 137 to 157; these read ILLS…GIIF and VFIL…VFIT. 4 N-linked (GlcNAc...) asparagine glycosylation sites follow: Asn162, Asn171, Asn178, and Asn195. 2 helical membrane-spanning segments follow: residues 243–263 and 274–294; these read IIIV…VSAL and SIAL…HYPI. N-linked (GlcNAc...) asparagine glycosylation is found at Asn315, Asn332, Asn351, Asn396, Asn405, and Asn462. Residues 515–535 form a helical membrane-spanning segment; the sequence is LLIAPTAVFAILLTGLGITGI.

The protein localises to the membrane. The protein is Transmembrane protein DDB_G0292058 of Dictyostelium discoideum (Social amoeba).